The primary structure comprises 562 residues: Wee1-like protein kinase 2 (562 aa).

Disordered regions lie at residues 1–86 (MRTA…DKGV) and 161–181 (YRQA…DDCS). Over residues 35–48 (HSNQRGSPVNSWRA) the composition is skewed to polar residues. Residues 217–491 (FLEIEKIGAG…AKNSLLRRCV (275 aa)) form the Protein kinase domain. ATP is bound by residues 223–231 (IGAGEFGSV) and Lys-246. The active-site Proton acceptor is Asp-344. 2 residues coordinate Mg(2+): Asn-349 and Asp-381. Residues 494-520 (AAQLQKQLNVEKFKTAMLERELKAAKL) adopt a coiled-coil conformation.

It belongs to the protein kinase superfamily. Ser/Thr protein kinase family. WEE1 subfamily.

The protein localises to the nucleus. The enzyme catalyses L-tyrosyl-[protein] + ATP = O-phospho-L-tyrosyl-[protein] + ADP + H(+). Its function is as follows. Oocyte-specific protein tyrosine kinase that phosphorylates and inhibits cdk1 and acts as a regulator of meiosis. Required to maintain meiotic arrest in oocytes by phosphorylating cdk1 at 'Tyr-15', leading to inhibit cdk1 activity and prevent meiotic reentry. The polypeptide is Wee1-like protein kinase 2 (wee2) (Xenopus tropicalis (Western clawed frog)).